We begin with the raw amino-acid sequence, 580 residues long: Pentatricopeptide repeat-containing protein At5g10690 (580 aa).

PPR repeat units follow at residues 76–110, 112–142, 151–181, 189–223, 224–254, 266–296, 302–337, 342–376, and 382–417; these read NTIVMNSVLEACVHCGNIDLALRMFHEMAEPGGIG, DSISYATILKGLGKARRIDEAFQMLETIEYG, SSSLIYGLLDALINAGDLRRANGLLARYDIL, SVLIYNLLMKGYVNSESPQAAINLLDEMLRLRLEP, DRLTYNTLIHACIKCGDLDAAMKFFNDMKEK, DVVTYTTLVKGFGDATDLLSLQEIFLEMKLC, DRTAFTAVVDAMLKCGSTSGALCVFGEILKRSGANE, KPHLYLSMMRAFAVQGDYGMVRNLYLRLWPDSSGS, and QQEADNLLMEAALNDGQLDEALGILLSIVRRWKTIP. The region spanning 486–553 is the CBS domain; sequence VPIVDDRGSC…IVVHCGNFSG (68 aa).

This sequence belongs to the PPR family. P subfamily.

The sequence is that of Pentatricopeptide repeat-containing protein At5g10690 (CBSPPR1) from Arabidopsis thaliana (Mouse-ear cress).